The chain runs to 208 residues: uncharacterized protein (208 aa).

2 disordered regions span residues 74 to 117 (FEYK…RDSP) and 181 to 208 (ESKLGSSEDSGTDRFSSNTSGSSGRKFK). Over residues 184–208 (LGSSEDSGTDRFSSNTSGSSGRKFK) the composition is skewed to polar residues.

This is an uncharacterized protein from Mus musculus (Mouse).